The sequence spans 426 residues: Glutamate-1-semialdehyde 2,1-aminomutase (426 aa).

At K265 the chain carries N6-(pyridoxal phosphate)lysine.

This sequence belongs to the class-III pyridoxal-phosphate-dependent aminotransferase family. HemL subfamily. Homodimer. Requires pyridoxal 5'-phosphate as cofactor.

The protein localises to the cytoplasm. It carries out the reaction (S)-4-amino-5-oxopentanoate = 5-aminolevulinate. It functions in the pathway porphyrin-containing compound metabolism; protoporphyrin-IX biosynthesis; 5-aminolevulinate from L-glutamyl-tRNA(Glu): step 2/2. This chain is Glutamate-1-semialdehyde 2,1-aminomutase, found in Shigella sonnei (strain Ss046).